A 448-amino-acid polypeptide reads, in one-letter code: Metacaspase-1 (448 aa).

The segment at 1-129 is disordered; sequence MFPGQGRHTY…GHYSRPPTDS (129 aa). The segment covering 10 to 44 has biased composition (low complexity); it reads YGGQQSNYSNQQQGYDQGYNQGYGQAYGQEYNQGY. A compositionally biased stretch (pro residues) spans 61 to 70; the sequence is SGPPPGPPPG. A compositionally biased stretch (polar residues) spans 99 to 114; that stretch reads YGNNQTRGSGNEQNYG. Residues His-231 and Cys-292 contribute to the active site.

This sequence belongs to the peptidase C14B family.

In terms of biological role, involved in cell death (apoptosis). In Candida albicans (strain SC5314 / ATCC MYA-2876) (Yeast), this protein is Metacaspase-1 (MCA1).